The primary structure comprises 596 residues: Succinate dehydrogenase flavoprotein subunit (596 aa).

FAD-binding positions include 18–23 (GAGGAG), 41–56 (TKLF…AQGG), and Asp225. His49 carries the post-translational modification Tele-8alpha-FAD histidine. Substrate contacts are provided by His246 and Thr258. Arg290 (proton acceptor) is an active-site residue. Residue His357 coordinates substrate. Residue Glu391 participates in FAD binding. Arg402 contacts substrate. Position 407 to 408 (407 to 408 (SL)) interacts with FAD.

This sequence belongs to the FAD-dependent oxidoreductase 2 family. FRD/SDH subfamily. In terms of assembly, part of an enzyme complex containing four subunits: a flavoprotein, an iron-sulfur, cytochrome b-556, and a hydrophobic anchor protein. FAD serves as cofactor.

It is found in the cell inner membrane. The catalysed reaction is a quinone + succinate = fumarate + a quinol. It functions in the pathway carbohydrate metabolism; tricarboxylic acid cycle; fumarate from succinate (bacterial route): step 1/1. This chain is Succinate dehydrogenase flavoprotein subunit (sdhA), found in Rickettsia felis (strain ATCC VR-1525 / URRWXCal2) (Rickettsia azadi).